Here is a 384-residue protein sequence, read N- to C-terminus: MYINYLKDLIGFKSVTPESNLAIEYIDDLLKKHGFKTEIKIFGDSKSEQVTNLYAVYGNGKPNICFVGHVDVVPAGDYHLWHNSAPFKANEQDGKIYGRGVVDMKGAIACFLTAALDLIKNNPDFKGSISFLLTSDEEGKAKHGTKEMLQYIYDQEYKIDFAVVGEPTCETEIGDTIKIGRRGSVNFKLNIEGLVGHVAYPHKANNPLSCLIKILNELINIKFDEGTEFFQSSNLEVTNIDVGNNTSNVIPASVEAYFNIRFNNLHNAETLGQLIEQIVKRYCKEYKVDYKLEYISAAESFIQNPNDKIKDFADIVESTLKIKPKFSTSGGTSDARFVKNYCSLVEFGLLSEMAHKINEYTKISDLQKLYDVYYNFLMEMLTNK.

Zn(2+) is bound at residue H69. The active site involves D71. Position 103 (D103) interacts with Zn(2+). E137 functions as the Proton acceptor in the catalytic mechanism. Zn(2+) contacts are provided by E138, E166, and H355.

It belongs to the peptidase M20A family. DapE subfamily. As to quaternary structure, homodimer. Requires Zn(2+) as cofactor. The cofactor is Co(2+).

The catalysed reaction is N-succinyl-(2S,6S)-2,6-diaminopimelate + H2O = (2S,6S)-2,6-diaminopimelate + succinate. Its pathway is amino-acid biosynthesis; L-lysine biosynthesis via DAP pathway; LL-2,6-diaminopimelate from (S)-tetrahydrodipicolinate (succinylase route): step 3/3. Its function is as follows. Catalyzes the hydrolysis of N-succinyl-L,L-diaminopimelic acid (SDAP), forming succinate and LL-2,6-diaminopimelate (DAP), an intermediate involved in the bacterial biosynthesis of lysine and meso-diaminopimelic acid, an essential component of bacterial cell walls. The protein is Succinyl-diaminopimelate desuccinylase of Rickettsia canadensis (strain McKiel).